We begin with the raw amino-acid sequence, 1005 residues long: Espin-like protein (1005 aa).

ANK repeat units lie at residues 1-31 (MEAQ…RPDI), 35-64 (LGAG…LPGN), 69-99 (NGAT…GLQD), 103-132 (SGVS…AATL), 136-166 (EGAL…GVNQ), 170-200 (SGAS…DVRL), 204-234 (DGMS…GLTA), 238-267 (EGAT…PIMR), 270-299 (WGGT…DPFL), and 303-332 (DGYT…PVRV). Disordered stretches follow at residues 355 to 383 (EERR…VPRE) and 458 to 480 (ADHP…AAEQ). The segment covering 458–469 (ADHPPEDQDQSQ) has biased composition (basic and acidic residues). Positions 502 to 539 (EDDLVYLEKQINDLQLRRRCQEYESELGRLAAQLQALL) form a coiled coil. 4 disordered regions span residues 611–643 (LAQG…QREI), 692–729 (PRGD…GPGL), 764–794 (LEAQ…PRLG), and 951–975 (PHAS…SQGS).

Interacts with MYO3A (via C-terminus). Interacts with MYO3B (via C-terminus). In terms of tissue distribution, expressed in inner ear hair cells. Expressed in utricle hair bundles (at protein level). Expressed in choclea (at protein level).

It localises to the cell projection. The protein resides in the stereocilium. Its function is as follows. Binds to but does not cross-link actin. Required for the formation and maintenance of inner ear hair cell stereocilia and staircase formation. Essential for normal hearing. In Mus musculus (Mouse), this protein is Espin-like protein (Espnl).